The following is a 97-amino-acid chain: Late embryogenesis abundant protein Lea5 (97 aa).

The protein belongs to the LEA type 3 family.

The protein is Late embryogenesis abundant protein Lea5 (LEA5) of Citrus sinensis (Sweet orange).